A 1706-amino-acid chain; its full sequence is PR domain zinc finger protein 2 (1706 aa).

An SET domain is found at 27–140 (EEVRLFPSAV…PGEELLVWYN (114 aa)). The segment at 154–342 (ERASARSKRS…TPPPHTPRAR (189 aa)) is disordered. A compositionally biased stretch (basic residues) spans 158-183 (ARSKRSSPKSRRGKKKSHENKNKGIR). A compositionally biased stretch (polar residues) spans 185-199 (HPTQLKASELDSTFA). Positions 258–294 (TDCEVNDVEEEELEEEEELEEEEEEELGEDGVEEADM) are enriched in acidic residues. The segment covering 299-313 (SAKEPEIRCEEKPED) has biased composition (basic and acidic residues). 2 consecutive C2H2-type zinc fingers follow at residues 355 to 377 (FPCQ…MHIH) and 385 to 407 (FKCK…ERRH). Disordered stretches follow at residues 400-446 (RRRH…QLGQ), 492-542 (RRHQ…EEEG), and 618-655 (LLKD…STAP). Ser416 carries the post-translational modification Phosphoserine. A compositionally biased stretch (basic and acidic residues) spans 427 to 439 (DGKGENVTSKDES). The C2H2-type 3 zinc finger occupies 476-499 (HPCKYCKKVFGTHTNMRRHQRRVH). Position 637 is a phosphoserine (Ser637). Residues Lys645, Lys684, and Lys686 each participate in a glycyl lysine isopeptide (Lys-Gly) (interchain with G-Cter in SUMO2) cross-link. Disordered stretches follow at residues 724–794 (TSSR…SPPC), 823–1075 (SGVK…SSVV), and 1088–1112 (VTFK…AGGQ). The span at 733 to 743 (SSPPSSPQHSP) shows a compositional bias: low complexity. A Phosphoserine modification is found at Ser738. A Glycyl lysine isopeptide (Lys-Gly) (interchain with G-Cter in SUMO2) cross-link involves residue Lys769. Residues Ser776, Ser780, and Ser791 each carry the phosphoserine modification. Polar residues predominate over residues 823–832 (SGVKQKSEGT). The segment covering 846–863 (SVHKKPCDSEGKEFKENH) has biased composition (basic and acidic residues). Glycyl lysine isopeptide (Lys-Gly) (interchain with G-Cter in SUMO2) cross-links involve residues Lys860 and Lys870. 2 stretches are compositionally biased toward polar residues: residues 891 to 912 (SLPT…SPDT) and 943 to 952 (LQTASLSSGQ). A compositionally biased stretch (pro residues) spans 962–983 (PSSPPPCPPVLTVATPPPPLLP). Positions 993 to 1009 (DASPQQCPSPFSNTTAQ) are enriched in polar residues. Positions 1010–1019 (SPLPILSPTV) are enriched in low complexity. Pro residues predominate over residues 1020-1030 (SPSPSPIPPVE). The segment covering 1034–1062 (SAASPGPPTLSSSSSSSSSFPSSSCSSTS) has biased composition (low complexity). Over residues 1091–1106 (KQEESESEGLKPKEEA) the composition is skewed to basic and acidic residues. 3 consecutive C2H2-type zinc fingers follow at residues 1123–1145 (FICN…LSVH), 1151–1174 (FKCE…FLLH), and 1180–1203 (FVCS…RDLH). Residues Lys1136 and Lys1140 each participate in a glycyl lysine isopeptide (Lys-Gly) (interchain with G-Cter in SUMO2) cross-link. The span at 1218 to 1227 (LRPQNFTDPS) shows a compositional bias: polar residues. Positions 1218–1251 (LRPQNFTDPSKANVEHMPSLPEEPLETSREEELN) are disordered. Lys1269 participates in a covalent cross-link: Glycyl lysine isopeptide (Lys-Gly) (interchain with G-Cter in SUMO2). The segment at 1321–1343 (IRCTKCGKGVDNMPELHKHILAC) adopts a C2H2-type 7; atypical zinc-finger fold. Residues 1443–1465 (HICPYCDREFTYIGSLNKHAAFS) form a C2H2-type 8; atypical zinc finger. The segment at 1466-1563 (CPKKPLSPSK…KKASSSSLRN (98 aa)) is disordered. Residues 1474–1486 (SKRKVSHSSKKGG) show a composition bias toward basic residues. A compositionally biased stretch (low complexity) spans 1487 to 1498 (HASSSSSDRNSS). The span at 1528–1544 (GPAQASLPSSSFRSRQN) shows a compositional bias: polar residues. Residues 1548–1563 (AASVKSKKASSSSLRN) are compositionally biased toward low complexity.

Belongs to the class V-like SAM-binding methyltransferase superfamily. As to quaternary structure, binds to the retinoblastoma protein (RB). Interacts with GATA3.

The protein localises to the nucleus. It carries out the reaction L-lysyl-[histone] + S-adenosyl-L-methionine = N(6)-methyl-L-lysyl-[histone] + S-adenosyl-L-homocysteine + H(+). The enzyme catalyses L-lysyl(9)-[histone H3] + 3 S-adenosyl-L-methionine = N(6),N(6),N(6)-trimethyl-L-lysyl(9)-[histone H3] + 3 S-adenosyl-L-homocysteine + 3 H(+). In terms of biological role, S-adenosyl-L-methionine-dependent histone methyltransferase that specifically methylates 'Lys-9' of histone H3. May function as a DNA-binding transcription factor. Binds to the macrophage-specific TPA-responsive element (MTE) of the HMOX1 (heme oxygenase 1) gene and may act as a transcriptional activator of this gene. The sequence is that of PR domain zinc finger protein 2 (Prdm2) from Rattus norvegicus (Rat).